The chain runs to 336 residues: Phospho-N-acetylmuramoyl-pentapeptide-transferase (336 aa).

10 helical membrane-spanning segments follow: residues 3–23 (LTLI…PYFI), 53–73 (GGTV…LFSI), 78–98 (SLAL…IGFL), 118–138 (LALQ…PSGI), 143–163 (VFGY…FWVV), 174–194 (GIDG…GVIA), 200–220 (FDVL…FLFN), 226–246 (VFMG…ISIA), 251–271 (WTLL…MLQV), and 316–336 (AFLW…LYVF).

This sequence belongs to the glycosyltransferase 4 family. MraY subfamily. The cofactor is Mg(2+).

The protein resides in the cell membrane. The enzyme catalyses UDP-N-acetyl-alpha-D-muramoyl-L-alanyl-gamma-D-glutamyl-L-lysyl-D-alanyl-D-alanine + di-trans,octa-cis-undecaprenyl phosphate = Mur2Ac(oyl-L-Ala-gamma-D-Glu-L-Lys-D-Ala-D-Ala)-di-trans,octa-cis-undecaprenyl diphosphate + UMP. Its pathway is cell wall biogenesis; peptidoglycan biosynthesis. Functionally, catalyzes the initial step of the lipid cycle reactions in the biosynthesis of the cell wall peptidoglycan: transfers peptidoglycan precursor phospho-MurNAc-pentapeptide from UDP-MurNAc-pentapeptide onto the lipid carrier undecaprenyl phosphate, yielding undecaprenyl-pyrophosphoryl-MurNAc-pentapeptide, known as lipid I. This is Phospho-N-acetylmuramoyl-pentapeptide-transferase from Streptococcus pyogenes serotype M6 (strain ATCC BAA-946 / MGAS10394).